Here is an 807-residue protein sequence, read N- to C-terminus: SWI/SNF complex subunit SWI3C (807 aa).

Residues 1–74 (MPASEDRRGK…DPGLGIGEVV (74 aa)) are disordered. Over residues 28 to 54 (EEEDMEEEDEENNNNNNEEMDDVENAD) the composition is skewed to acidic residues. One can recognise an SWIRM domain in the interval 176-274 (HVLPMHSDWF…YCATAQSHPG (99 aa)). The ZZ-type; degenerate zinc-finger motif lies at 340-394 (LCDSHCNHCSRPLPTVYFQSQKKGDILLCCDCFHHGRFVVGHSCLDFVRVDPMKF). Positions 345, 348, 368, and 371 each coordinate Zn(2+). The SANT domain maps to 398–449 (QDGDNWTDQETLLLLEAVELYNENWVQIADHVGSKSKAQCILHFLRLPVEDG). 2 stretches are compositionally biased toward polar residues: residues 458 to 467 (GVTNTENPTN) and 552 to 569 (ENQQ…NGAE). Disordered regions lie at residues 458–487 (GVTN…SEQG) and 549–571 (LDGE…AEAQ). Residues 598-656 (ADHEEREIQRLSANIVNHQLKRMELKLKQFAEIETLLMKECEQVEKTRQRFSAERARML) adopt a coiled-coil conformation. Low complexity-rich tracts occupy residues 692–703 (QHQQQQASATSQ) and 726–739 (QQQQ…QQQQ). 3 disordered regions span residues 692-713 (QHQQ…FSNN), 721-740 (HFMA…QQQA), and 781-807 (SINQ…LGLN). Residues 798-807 (SGSGSGLGLN) are compositionally biased toward gly residues.

Heterodimer. Interacts with SWI3A, SWI3B and BRM, but not with BSH. Interacts with MORC6 and SUVH9. In terms of tissue distribution, expressed in roots, stems, leaves, flowers and siliques.

The protein resides in the nucleus. Component of a multiprotein complex equivalent of the SWI/SNF complex, an ATP-dependent chromatin-remodeling complex, which is required for the positive and negative regulation of gene expression of a large number of genes. It changes chromatin structure by altering DNA-histone contacts within a nucleosome, leading eventually to a change in nucleosome position, thus facilitating or repressing binding of gene-specific transcription factors. In Arabidopsis thaliana (Mouse-ear cress), this protein is SWI/SNF complex subunit SWI3C (SWI3C).